A 522-amino-acid chain; its full sequence is Glutamate--cysteine ligase (522 aa).

This sequence belongs to the glutamate--cysteine ligase type 1 family. Type 1 subfamily.

It catalyses the reaction L-cysteine + L-glutamate + ATP = gamma-L-glutamyl-L-cysteine + ADP + phosphate + H(+). The protein operates within sulfur metabolism; glutathione biosynthesis; glutathione from L-cysteine and L-glutamate: step 1/2. The chain is Glutamate--cysteine ligase from Vibrio campbellii (strain ATCC BAA-1116).